The primary structure comprises 228 residues: uncharacterized protein (228 aa).

21–28 (GMIALGKT) provides a ligand contact to ATP.

This is an uncharacterized protein from Mycoplasma genitalium (strain ATCC 33530 / DSM 19775 / NCTC 10195 / G37) (Mycoplasmoides genitalium).